A 114-amino-acid chain; its full sequence is Probable gas vesicle protein J2 (114 aa).

Over residues 1 to 10 the composition is skewed to basic and acidic residues; that stretch reads MTDLDHRYPG. The interval 1–21 is disordered; that stretch reads MTDLDHRYPGEETEPYGPPSG.

It belongs to the gas vesicle GvpA family. Interacts with GvpA.

It localises to the gas vesicle. Its function is as follows. A minor component of the gas vesicle, might be involved in nucleating gas vesicle formation. Gas vesicles (GV) are hollow, gas filled proteinaceous nanostructures. It is not clear what function GVs perform in soil bacteria. In Streptomyces coelicolor (strain ATCC BAA-471 / A3(2) / M145), this protein is Probable gas vesicle protein J2.